The following is a 478-amino-acid chain: MDQMTVEEKILEHQELEDGSSSFRWLVSSTVIAIGGATVALYISGKIDWKIPAIEAGLALTAGGTITCGYLWFKKRVKTVRKLILQMNKTRSALRKRRQIFFSISMCMPRHRHPSILRACRLTVSAIECLTEETKSLNNGTTWQDLYTDEIREIISRSTVDSQLLKIEEIQEGDNDKMDFEQVFETLISIFKLHASEYSRVVILNFLNSPVFESKKVSKFFETLGRLQELMYNLESVERLALKTETKLSRNERKMDGKMKNKSLLELGWKQQTALALEAILERLESESVTQSEVESALHKTFLVVKAEPAFPQPVKKIDVEVKNQDQKNPEVIVIEKGTGERTDIDMVFEGTPLSEADKLSASKSAVARDVLLDGSEGRCHEASLFGELKMVLEPRRTDFAKRERTALAKFYGVDEHQLEQKEDEETFEAIASGDGEDPDPYDWRKDAEMSAGIHHDANNDDFLKSLKLRRVDDDIIE.

Over Met1–Arg24 the chain is Cytoplasmic. The helical transmembrane segment at Trp25 to Gly45 threads the bilayer. The Extracellular segment spans residues Lys46–Pro52. A helical transmembrane segment spans residues Ala53–Phe73. Residues Lys74–Glu478 are Cytoplasmic-facing.

It localises to the mitochondrion. Its subcellular location is the mitochondrion outer membrane. In terms of biological role, in the first mitotic division in embryos, required for mitotic spindle alignment and asymmetric cell division. Required for motor-driven chromosome movement and homolog searching within the nucleus, and subsequently ensures homologous chromosome pairing during the prophase stage of meiosis. The polypeptide is Spindle defective protein 3 (Caenorhabditis elegans).